The sequence spans 338 residues: Pyridoxal 5'-phosphate synthase subunit PdxS (338 aa).

Asp-66 is a binding site for D-ribose 5-phosphate. Lys-123 (schiff-base intermediate with D-ribose 5-phosphate) is an active-site residue. Residue Gly-195 coordinates D-ribose 5-phosphate. Lys-207 serves as a coordination point for D-glyceraldehyde 3-phosphate. D-ribose 5-phosphate-binding positions include Gly-256 and 277 to 278 (GS).

It belongs to the PdxS/SNZ family. In the presence of PdxT, forms a dodecamer of heterodimers.

It catalyses the reaction aldehydo-D-ribose 5-phosphate + D-glyceraldehyde 3-phosphate + L-glutamine = pyridoxal 5'-phosphate + L-glutamate + phosphate + 3 H2O + H(+). The protein operates within cofactor biosynthesis; pyridoxal 5'-phosphate biosynthesis. Catalyzes the formation of pyridoxal 5'-phosphate from ribose 5-phosphate (RBP), glyceraldehyde 3-phosphate (G3P) and ammonia. The ammonia is provided by the PdxT subunit. Can also use ribulose 5-phosphate and dihydroxyacetone phosphate as substrates, resulting from enzyme-catalyzed isomerization of RBP and G3P, respectively. This chain is Pyridoxal 5'-phosphate synthase subunit PdxS, found in Saccharolobus islandicus (strain L.S.2.15 / Lassen #1) (Sulfolobus islandicus).